We begin with the raw amino-acid sequence, 351 residues long: Glycerol-3-phosphate dehydrogenase 1-like protein (351 aa).

G11–G16 is an NAD(+) binding site. K121 contacts substrate. Position 154 (A154) interacts with NAD(+). Catalysis depends on K205, which acts as the Proton acceptor. NAD(+) contacts are provided by R271, K298, and Q300. Position 271–272 (R271–N272) interacts with substrate.

The protein belongs to the NAD-dependent glycerol-3-phosphate dehydrogenase family.

Its subcellular location is the cytoplasm. The catalysed reaction is sn-glycerol 3-phosphate + NAD(+) = dihydroxyacetone phosphate + NADH + H(+). In terms of biological role, plays a role in regulating cardiac sodium current. In Danio rerio (Zebrafish), this protein is Glycerol-3-phosphate dehydrogenase 1-like protein (gpd1l).